The primary structure comprises 262 residues: Putative protein-methionine-sulfoxide reductase subunit YedZ1 (262 aa).

This sequence belongs to the MsrP family.

In terms of biological role, part of the YedY1-YedZ1 system that may repair oxidized proteins containing methionine sulfoxide residues (Met-O). This Azospira oryzae (strain ATCC BAA-33 / DSM 13638 / PS) (Dechlorosoma suillum) protein is Putative protein-methionine-sulfoxide reductase subunit YedZ1.